A 140-amino-acid chain; its full sequence is Ribonucleases P/MRP protein subunit POP7 (140 aa).

A disordered region spans residues 1–21 (MALKKNTHNKSTKRVTKHPSL). S115 bears the Phosphoserine mark.

Belongs to the histone-like Alba family. Component of nuclear RNase P and RNase MRP complexes. RNase P consists of an RNA moiety and at least 9 protein subunits including POP1, POP3, POP4, POP5, POP6, POP7, POP8, RPP1 and RPR2. RNase MRP complex consists of an RNA moiety and at least 10 protein subunits including POP1, POP3, POP4, POP5, POP6, POP7, POP8, RMP1, RPP1 and SNM1, many of which are shared with the RNase P complex.

It is found in the nucleus. The enzyme catalyses Endonucleolytic cleavage of RNA, removing 5'-extranucleotides from tRNA precursor.. Component of ribonuclease P, a protein complex that generates mature tRNA molecules by cleaving their 5'-ends. Also a component of RNase MRP, which cleaves pre-rRNA sequences. The sequence is that of Ribonucleases P/MRP protein subunit POP7 (POP7) from Saccharomyces cerevisiae (strain ATCC 204508 / S288c) (Baker's yeast).